The primary structure comprises 218 residues: Zinc finger BED domain-containing protein 2 (218 aa).

Over residues 1–11 the composition is skewed to acidic residues; the sequence is MMRREDEEEEG. Residues 1–24 form a disordered region; it reads MMRREDEEEEGTMMKAKGDLEMKE. The segment at 52 to 113 adopts a BED-type zinc-finger fold; the sequence is TRFSEAWEYF…SMHREELEKS (62 aa). Cys78, Cys81, His101, and His106 together coordinate Zn(2+). The tract at residues 104 to 137 is disordered; sequence SMHREELEKSGHGQAGQRQDPRPHGPQLPTGIEG. Positions 105 to 114 are enriched in basic and acidic residues; the sequence is MHREELEKSG.

In terms of tissue distribution, expressed in keratinocytes.

The protein localises to the nucleus. In terms of biological role, transcriptional regulator which has intrinsic repressor activity and which competes with the transcriptional activator IRF1 for binding to the 5'-[CA]GAA[AC]C[CT]-3' consensus sequence in gene promoters. May thereby play a role in keratinocyte differentiation. The protein is Zinc finger BED domain-containing protein 2 (ZBED2) of Homo sapiens (Human).